Here is a 426-residue protein sequence, read N- to C-terminus: Glutamate-1-semialdehyde 2,1-aminomutase (426 aa).

Position 265 is an N6-(pyridoxal phosphate)lysine (lysine 265).

The protein belongs to the class-III pyridoxal-phosphate-dependent aminotransferase family. HemL subfamily. In terms of assembly, homodimer. Requires pyridoxal 5'-phosphate as cofactor.

It localises to the cytoplasm. The catalysed reaction is (S)-4-amino-5-oxopentanoate = 5-aminolevulinate. Its pathway is porphyrin-containing compound metabolism; protoporphyrin-IX biosynthesis; 5-aminolevulinate from L-glutamyl-tRNA(Glu): step 2/2. This Salmonella gallinarum (strain 287/91 / NCTC 13346) protein is Glutamate-1-semialdehyde 2,1-aminomutase.